Consider the following 309-residue polypeptide: Ferrochelatase (309 aa).

Positions 185 and 264 each coordinate Fe cation.

This sequence belongs to the ferrochelatase family.

The protein localises to the cytoplasm. The enzyme catalyses heme b + 2 H(+) = protoporphyrin IX + Fe(2+). It participates in porphyrin-containing compound metabolism; protoheme biosynthesis; protoheme from protoporphyrin-IX: step 1/1. In terms of biological role, catalyzes the ferrous insertion into protoporphyrin IX. In Aquifex aeolicus (strain VF5), this protein is Ferrochelatase.